Here is an 83-residue protein sequence, read N- to C-terminus: Neurotoxin LmNaTx10 (83 aa).

A signal peptide spans 1–19; that stretch reads MNFLIFIAVASSLALGALC. Positions 21–80 constitute an LCN-type CS-alpha/beta domain; it reads KEGYPYDGNNCRYICFRNQYCDDLCKKLKGESGYCYGWNQSCYCYGLPDTEKTKPDKRCH. 4 cysteine pairs are disulfide-bonded: Cys31–Cys79, Cys35–Cys55, Cys41–Cys62, and Cys45–Cys64.

It belongs to the long (4 C-C) scorpion toxin superfamily. Sodium channel inhibitor family. Alpha subfamily. Expressed by the venom gland.

The protein localises to the secreted. Its function is as follows. Binds voltage-independently at site-3 of voltage-gated sodium channels (Nav) and inhibits the inactivation of the activated channels, thereby blocking neuronal transmission. This Lychas mucronatus (Chinese swimming scorpion) protein is Neurotoxin LmNaTx10.